Reading from the N-terminus, the 101-residue chain is NAD(P)H-quinone oxidoreductase subunit 4L (101 aa).

3 consecutive transmembrane segments (helical) span residues 3–23 (LQYF…GLVT), 30–50 (VLMS…AFSN), and 64–84 (IFVI…VLAI).

Belongs to the complex I subunit 4L family. As to quaternary structure, NDH-1 can be composed of about 15 different subunits; different subcomplexes with different compositions have been identified which probably have different functions.

It is found in the cellular thylakoid membrane. The enzyme catalyses a plastoquinone + NADH + (n+1) H(+)(in) = a plastoquinol + NAD(+) + n H(+)(out). It catalyses the reaction a plastoquinone + NADPH + (n+1) H(+)(in) = a plastoquinol + NADP(+) + n H(+)(out). Functionally, NDH-1 shuttles electrons from an unknown electron donor, via FMN and iron-sulfur (Fe-S) centers, to quinones in the respiratory and/or the photosynthetic chain. The immediate electron acceptor for the enzyme in this species is believed to be plastoquinone. Couples the redox reaction to proton translocation, and thus conserves the redox energy in a proton gradient. Cyanobacterial NDH-1 also plays a role in inorganic carbon-concentration. This Leptolyngbya boryana (Plectonema boryanum) protein is NAD(P)H-quinone oxidoreductase subunit 4L.